The chain runs to 596 residues: Chaperone protein DnaK (596 aa).

Thr-180 is modified (phosphothreonine; by autocatalysis).

The protein belongs to the heat shock protein 70 family.

Functionally, acts as a chaperone. This is Chaperone protein DnaK from Thermotoga neapolitana (strain ATCC 49049 / DSM 4359 / NBRC 107923 / NS-E).